We begin with the raw amino-acid sequence, 347 residues long: D-alanine--D-alanine ligase (347 aa).

The ATP-grasp domain maps to 131–333 (KRVLESAGIA…YPDLIERLVE (203 aa)). ATP is bound at residue 161 to 216 (EEELTYPVFTKPSNMGSSVGISKSENQEELRQALKLAFQYDSRVLVEQGVNAREIE). Positions 287, 300, and 302 each coordinate Mg(2+).

Belongs to the D-alanine--D-alanine ligase family. The cofactor is Mg(2+). Requires Mn(2+) as cofactor.

Its subcellular location is the cytoplasm. The catalysed reaction is 2 D-alanine + ATP = D-alanyl-D-alanine + ADP + phosphate + H(+). It participates in cell wall biogenesis; peptidoglycan biosynthesis. Its function is as follows. Cell wall formation. This is D-alanine--D-alanine ligase from Streptococcus pneumoniae (strain Hungary19A-6).